A 591-amino-acid polypeptide reads, in one-letter code: L-fucose isomerase (591 aa).

Residues glutamate 337 and aspartate 361 each act as proton acceptor in the active site. Mn(2+) is bound by residues glutamate 337, aspartate 361, and histidine 528.

The protein belongs to the L-fucose isomerase family. In terms of assembly, homohexamer. It depends on Mn(2+) as a cofactor.

The protein localises to the cytoplasm. The enzyme catalyses L-fucose = L-fuculose. It functions in the pathway carbohydrate degradation; L-fucose degradation; L-lactaldehyde and glycerone phosphate from L-fucose: step 1/3. Functionally, converts the aldose L-fucose into the corresponding ketose L-fuculose. The polypeptide is L-fucose isomerase (Salmonella arizonae (strain ATCC BAA-731 / CDC346-86 / RSK2980)).